The following is a 247-amino-acid chain: 5-oxoprolinase subunit A 1 (247 aa).

Belongs to the LamB/PxpA family. In terms of assembly, forms a complex composed of PxpA, PxpB and PxpC.

It catalyses the reaction 5-oxo-L-proline + ATP + 2 H2O = L-glutamate + ADP + phosphate + H(+). In terms of biological role, catalyzes the cleavage of 5-oxoproline to form L-glutamate coupled to the hydrolysis of ATP to ADP and inorganic phosphate. This is 5-oxoprolinase subunit A 1 from Ralstonia nicotianae (strain ATCC BAA-1114 / GMI1000) (Ralstonia solanacearum).